An 808-amino-acid chain; its full sequence is Digalactosyldiacylglycerol synthase 1, chloroplastic (808 aa).

The interval 1–23 (MVKETLIPPSSTSMTTGTSSSSS) is disordered. Residues 1–58 (MVKETLIPPSSTSMTTGTSSSSSLSMTLSSTNALSFLSKGWREVWDSADADLQLMRDR) constitute a chloroplast transit peptide. Positions 10 to 23 (SSTSMTTGTSSSSS) are enriched in low complexity.

The protein belongs to the glycosyltransferase group 1 family. Glycosyltransferase 4 subfamily.

It is found in the plastid. Its subcellular location is the chloroplast outer membrane. It catalyses the reaction a 1,2-diacyl-3-O-(beta-D-galactosyl)-sn-glycerol + UDP-alpha-D-galactose = a 1,2-diacyl-3-O-[alpha-D-galactosyl-(1-&gt;6)-beta-D-galactosyl]-sn-glycerol + UDP + H(+). Involved in the synthesis of diacylglycerol galactolipids that are specifically found in thylakoid membranes. Specific for alpha-glycosidic linkages. Responsible for the final assembly of galactolipids in photosynthetic membranes. Digalactosyldiacylglycerol (DGDG) provides stability to the photosystem I (PSI) complex, especially to the PsaA, PsaB, PsaC, PsaL and PsaH subunits. This chain is Digalactosyldiacylglycerol synthase 1, chloroplastic, found in Arabidopsis thaliana (Mouse-ear cress).